Reading from the N-terminus, the 102-residue chain is NADH-quinone oxidoreductase subunit K (102 aa).

3 helical membrane passes run 4–24 (IGLN…LVGV), 31–51 (LMLF…FAAI), and 65–85 (FFVI…LIVW).

It belongs to the complex I subunit 4L family. As to quaternary structure, NDH-1 is composed of 14 different subunits. Subunits NuoA, H, J, K, L, M, N constitute the membrane sector of the complex.

It is found in the cell inner membrane. The catalysed reaction is a quinone + NADH + 5 H(+)(in) = a quinol + NAD(+) + 4 H(+)(out). Its function is as follows. NDH-1 shuttles electrons from NADH, via FMN and iron-sulfur (Fe-S) centers, to quinones in the respiratory chain. The immediate electron acceptor for the enzyme in this species is believed to be ubiquinone. Couples the redox reaction to proton translocation (for every two electrons transferred, four hydrogen ions are translocated across the cytoplasmic membrane), and thus conserves the redox energy in a proton gradient. The chain is NADH-quinone oxidoreductase subunit K from Sulfurimonas denitrificans (strain ATCC 33889 / DSM 1251) (Thiomicrospira denitrificans (strain ATCC 33889 / DSM 1251)).